Consider the following 410-residue polypeptide: MIVKVSNLGGSGIAEMPSSKSFTQRYVLASAFLNKSVVLNGITITNDDDVAMRIAESVGSTITINNRSIKISSNFKCPEEIYVGESGTSYRLSIGLLAASGCVTRIKGEDSLAKRPIEPLLMALGENGVKFERNEAGFYNVDGRNSQKKHVEIEGSSSQFVSSLMLYYAKKGGGEFTARNIKSIGYVYITKRVLYDLGYFANIERTITINPTGVWKTAIDVEPDYSSMAFFMVLGLLSDSVDVRFRIKRISRIQPDSVILDLFKNNILINGEEIRVISGINEPVSVDADMNPDLCPPLSVIGIFSKYGVQIRNYERLKTKESNRYEGIIDLAERFGANVEDNGQDLFIKPGSVRFPDVISYKDHRMIMAASIASLIGGFPTVIENAEKTAKSFPGFFAELSKFANVEELA.

Residues K20, S21, and R25 each contribute to the 3-phosphoshikimate site. A phosphoenolpyruvate-binding site is contributed by K20. Residues G87 and R115 each coordinate phosphoenolpyruvate. Residues S157, S158, Q159, S183, D293, and K320 each contribute to the 3-phosphoshikimate site. Q159 contributes to the phosphoenolpyruvate binding site. D293 serves as the catalytic Proton acceptor. Phosphoenolpyruvate is bound by residues R324, R365, and K391.

This sequence belongs to the EPSP synthase family. As to quaternary structure, monomer.

The protein resides in the cytoplasm. The catalysed reaction is 3-phosphoshikimate + phosphoenolpyruvate = 5-O-(1-carboxyvinyl)-3-phosphoshikimate + phosphate. The protein operates within metabolic intermediate biosynthesis; chorismate biosynthesis. In terms of biological role, catalyzes the transfer of the enolpyruvyl moiety of phosphoenolpyruvate (PEP) to the 5-hydroxyl of shikimate-3-phosphate (S3P) to produce enolpyruvyl shikimate-3-phosphate and inorganic phosphate. In Thermoplasma volcanium (strain ATCC 51530 / DSM 4299 / JCM 9571 / NBRC 15438 / GSS1), this protein is 3-phosphoshikimate 1-carboxyvinyltransferase.